Consider the following 267-residue polypeptide: Hydroxypyruvate/pyruvate aldolase Bphyt_5830 (267 aa).

The Proton acceptor role is filled by H48. E152 and D178 together coordinate a divalent metal cation.

The protein belongs to the HpcH/HpaI aldolase family. The cofactor is a divalent metal cation.

It catalyses the reaction D-glyceraldehyde + 3-hydroxypyruvate = 2-dehydro-D-galactonate. The enzyme catalyses D-glyceraldehyde + 3-hydroxypyruvate = (3R,4S,5R)-3,4,5,6-tetrahydroxy-2-oxohexanoate. The catalysed reaction is D-glyceraldehyde + pyruvate = 2-dehydro-3-deoxy-L-galactonate. Aldolase which can catalyze in vitro the aldolisation reaction between hydroxypyruvate (HPA) or pyruvate (PA) and D-glyceraldehyde (D-GA). The condensation of hydroxypyruvate and D-glyceraldehyde produces 2-dehydro-D-galactonate as the major product and (3R,4S,5R)-3,4,5,6-tetrahydroxy-2-oxohexanoate. The condensation of pyruvate and D-glyceraldehyde produces 2-dehydro-3-deoxy-L-galactonate. The protein is Hydroxypyruvate/pyruvate aldolase Bphyt_5830 of Paraburkholderia phytofirmans (strain DSM 17436 / LMG 22146 / PsJN) (Burkholderia phytofirmans).